The following is a 106-amino-acid chain: Thioredoxin-like protein YusE (106 aa).

The region spanning 1–101 is the Thioredoxin domain; sequence MKELQEHELD…LYELIKQKSS (101 aa). Cys-26 and Cys-29 are oxidised to a cystine.

The chain is Thioredoxin-like protein YusE (yusE) from Bacillus subtilis (strain 168).